A 305-amino-acid chain; its full sequence is MSGAGSKRKNVFIEKATKLFTTYDKMIVAEADFVGSSQLQKIRKSIRGIGAVLMGKKTMIRKVIRDLADSKPELDALNTYLKQNTCIIFCKDNIAEVKRVINTQRVGAPAKAGVFAPNDVIIPAGPTGMEPTQTSFLQDLKIATKINRGQIDIVNEVHIIKTGQKVGASEATLLQKLNIKPFTYGLEPKIIYDAGACYSPSISEEDLINKFKQGIFNIAAISLEIGYPTVASIPHSVMNAFKNLLAISFETSYTFDAAEKFKSAAAAAPVAAAPSAAAPAAAAKKVVVEEKKEESDDDMGMGLFD.

It belongs to the universal ribosomal protein uL10 family. In terms of assembly, P0 forms a pentameric complex by interaction with dimers of P1 and P2. Post-translationally, phosphorylated.

In terms of biological role, ribosomal protein P0 is the functional equivalent of E.coli protein L10. In Dictyostelium discoideum (Social amoeba), this protein is Large ribosomal subunit protein uL10 (rplp0).